Reading from the N-terminus, the 353-residue chain is MSIEDLARANVRALTPYQSARRLGGKGDVWLNANEFPTAVAFQLTEQTLNRYPEPQPKAVIESYARYAEVKPEQVLVSRGADEGIELLIRAFCEPGEDAVLYCPPTYGMYSVSAETIGVECRTVPTLADWQLDLPGIEARLDGVKVVFVCSPNNPTGQIIDPQSMRDLLEMTRGKAIVVADEAYIEFCPQATLAGWLSDYPHLVVLRTLSKAFALAGLRCGFTLANAEVINVLLKVIAPYPLSTPVADIAAQALSPEGIAAMRQRVAQILDERRYLVEQLRGIACVEQVFDSETNYVLARITASSAVFKSLWDQGIILRDQNKQPSLSGCLRITIGTRAESQRVIDALTAENV.

Lys-211 carries the post-translational modification N6-(pyridoxal phosphate)lysine.

This sequence belongs to the class-II pyridoxal-phosphate-dependent aminotransferase family. Histidinol-phosphate aminotransferase subfamily. In terms of assembly, homodimer. It depends on pyridoxal 5'-phosphate as a cofactor.

It catalyses the reaction L-histidinol phosphate + 2-oxoglutarate = 3-(imidazol-4-yl)-2-oxopropyl phosphate + L-glutamate. Its pathway is amino-acid biosynthesis; L-histidine biosynthesis; L-histidine from 5-phospho-alpha-D-ribose 1-diphosphate: step 7/9. In Klebsiella pneumoniae subsp. pneumoniae (strain ATCC 700721 / MGH 78578), this protein is Histidinol-phosphate aminotransferase.